Here is a 1305-residue protein sequence, read N- to C-terminus: Rho GTPase-activating protein 33 (1305 aa).

The segment at 1 to 64 (MLQAQKQSDP…KPGKRLSAPR (64 aa)) is disordered. Position 32 is a phosphoserine (S32). Residues 83 to 192 (FGHIQLLLSP…CGPVLTWMEL (110 aa)) form the PX; atypical domain. In terms of domain architecture, SH3 spans 210–272 (PAVAAAHVVK…PSECVELFTE (63 aa)). Residues 339–534 (CDLGEHLSNS…FLLTHVEVLF (196 aa)) form the Rho-GAP domain. Disordered stretches follow at residues 575–818 (RTQG…LDIS), 864–1054 (LSDT…SFFS), and 1115–1305 (SYSG…RSYC). A compositionally biased stretch (low complexity) spans 582-595 (TPTEPTTPKTPASP). S594 carries the phosphoserine modification. Over residues 596–608 (VERRKRERAEKQR) the composition is skewed to basic and acidic residues. Residues 646–669 (SGSRPDTVTLRSAKSEESLSSQAS) are compositionally biased toward polar residues. S660 carries the phosphoserine modification. Residues 694–733 (APAGSCESLSSSSSSSSSSSSSSSSESSAGGLGPLSGSPS) show a composition bias toward low complexity. At S749 the chain carries Phosphoserine. The span at 774–786 (PGDPAPPASPAPP) shows a compositional bias: pro residues. Residues 787 to 798 (ASASAFPPRATP) show a composition bias toward low complexity. A compositionally biased stretch (polar residues) spans 864 to 873 (LSDTCQQEIS). Pro residues predominate over residues 895 to 915 (LLPPPLPLLRPGGAPPPPPKN). The segment covering 916–940 (PARLMALALAERAQQVAEQQSQQEQ) has biased composition (low complexity). Composition is skewed to polar residues over residues 992 to 1020 (RQQS…SQVS), 1039 to 1054 (SPCS…SFFS), and 1115 to 1125 (SYSGPSRSWSP). Y1188 is subject to Phosphotyrosine. Residues 1194–1208 (GPRGPSPASSSSSSP) show a composition bias toward low complexity. Omega-N-methylarginine is present on R1263. Residues 1292–1305 (SWSLHSEGQTRSYC) show a composition bias toward polar residues.

Belongs to the PX domain-containing GAP family. In terms of assembly, specifically interacts with CDC42 and RHOQ/TC10 through its Rho-GAP domain. Interacts with NEK6. In terms of tissue distribution, highly expressed in brain and testis. Also expressed in white adipose tissue (WAT) and muscle at a low level.

The protein localises to the cell membrane. May be involved in several stages of intracellular trafficking. Could play an important role in the regulation of glucose transport by insulin. May act as a downstream effector of RHOQ/TC10 in the regulation of insulin-stimulated glucose transport. In Mus musculus (Mouse), this protein is Rho GTPase-activating protein 33 (Arhgap33).